The sequence spans 77 residues: Translation initiation factor IF-1, chloroplastic (77 aa).

The S1-like domain maps to 1–72 (MNKQGLFQME…TKGRIVYRQR (72 aa)).

The protein belongs to the IF-1 family. As to quaternary structure, component of the 30S ribosomal translation pre-initiation complex which assembles on the 30S ribosome in the order IF-2 and IF-3, IF-1 and N-formylmethionyl-tRNA(fMet); mRNA recruitment can occur at any time during PIC assembly.

The protein resides in the plastid. It localises to the chloroplast. In terms of biological role, one of the essential components for the initiation of protein synthesis. Stabilizes the binding of IF-2 and IF-3 on the 30S subunit to which N-formylmethionyl-tRNA(fMet) subsequently binds. Helps modulate mRNA selection, yielding the 30S pre-initiation complex (PIC). Upon addition of the 50S ribosomal subunit IF-1, IF-2 and IF-3 are released leaving the mature 70S translation initiation complex. This is Translation initiation factor IF-1, chloroplastic from Nephroselmis olivacea (Green alga).